Reading from the N-terminus, the 316-residue chain is Homoserine kinase (316 aa).

96–106 (PHGRGLGSSGA) is a binding site for ATP.

It belongs to the GHMP kinase family. Homoserine kinase subfamily.

Its subcellular location is the cytoplasm. The catalysed reaction is L-homoserine + ATP = O-phospho-L-homoserine + ADP + H(+). The protein operates within amino-acid biosynthesis; L-threonine biosynthesis; L-threonine from L-aspartate: step 4/5. In terms of biological role, catalyzes the ATP-dependent phosphorylation of L-homoserine to L-homoserine phosphate. The protein is Homoserine kinase of Clavibacter michiganensis subsp. michiganensis (strain NCPPB 382).